Reading from the N-terminus, the 109-residue chain is Profilin (109 aa).

The protein belongs to the profilin family. Multimer. Occurs in many kinds of cells as a complex with monomeric actin in a 1:1 ratio.

It is found in the cytoplasm. The protein resides in the cytoskeleton. Functionally, binds to actin and affects the structure of the cytoskeleton. At high concentrations, profilin prevents the polymerization of actin, whereas it enhances it at low concentrations. By binding to PIP2, it inhibits the formation of IP3 and DG. This chain is Profilin, found in Actinidia deliciosa (Kiwi).